The primary structure comprises 447 residues: Argininosuccinate synthase (447 aa).

Residues 17 to 25 and Ala-43 each bind ATP; that span reads AFSGGLDTS. Tyr-99 provides a ligand contact to L-citrulline. Gly-129 and Thr-131 together coordinate ATP. Thr-131, Asn-135, and Asp-136 together coordinate L-aspartate. Residue Asn-135 participates in L-citrulline binding. Asp-136 lines the ATP pocket. The L-citrulline site is built by Arg-139 and Ser-192. Asp-194 provides a ligand contact to ATP. The L-citrulline site is built by Thr-201, Glu-203, and Glu-280.

Belongs to the argininosuccinate synthase family. Type 2 subfamily. In terms of assembly, homotetramer.

It is found in the cytoplasm. The catalysed reaction is L-citrulline + L-aspartate + ATP = 2-(N(omega)-L-arginino)succinate + AMP + diphosphate + H(+). It participates in amino-acid biosynthesis; L-arginine biosynthesis; L-arginine from L-ornithine and carbamoyl phosphate: step 2/3. This is Argininosuccinate synthase (argG) from Escherichia coli O157:H7.